A 526-amino-acid polypeptide reads, in one-letter code: Acid-sensing ion channel 1 (526 aa).

At 1–49 the chain is on the cytoplasmic side; the sequence is MELKTEEEEVGGVQPVSIQAFASSSTLHGLAHIFSYERLSLKRALWALC. Residues 50–66 traverse the membrane as a helical segment; it reads FLGSLAVLLCVCTERVQ. Over 67–425 the chain is Extracellular; that stretch reads YYFCYHHVTK…ETIEQKKAYE (359 aa). Disulfide bonds link C93–C194, C172–C179, C290–C365, C308–C361, C312–C359, C321–C343, and C323–C335. 2 N-linked (GlcNAc...) asparagine glycosylation sites follow: N366 and N393. Residues 426–456 traverse the membrane as a discontinuously helical segment; that stretch reads IAGLLGDIGGQMGLFIGASILTVLELFDYAY. Residues 442–444 carry the GAS motif; ion selectivity filter motif; the sequence is GAS. Topologically, residues 457–526 are cytoplasmic; that stretch reads EVIKHRLCRR…ARGTFEDFTC (70 aa). S477 and S497 each carry phosphoserine.

This sequence belongs to the amiloride-sensitive sodium channel (TC 1.A.6) family. ASIC1 subfamily. In terms of assembly, homotrimer. Heterotrimer; with other ASIC proteins producing channel with different properties. Interacts with PICK1; regulates ASIC1 clustering in membranes. Interacts with STOM; alters heterotrimeric ASIC channels activity. Post-translationally, pH-gating could be regulated by serine proteases. Phosphorylation by PKA regulates interaction with PICK1 and subcellular localization. Phosphorylation by PKC may regulate the channel. In terms of tissue distribution, expressed in dorsal root ganglia and sciatic nerve (at protein level). Widely distributed throughout the brain. Expressed in olfactory bulb, neo and allocortical regions, dentate granule cells, pyramidal cells of CA1-CA3 subfields of the hippocampal formation, habenula, basolateral amygdaloid nuclei, and in the Purkinje and granule cells of the cerebellum. Diffusely detected over most other regions of the basal ganglia, including thalamic nuclei, substantia nigra, striatum and globus pallidus, hypothalamus, midbrain, pons, medulla and choroid plexus. Expressed only in dorsal root ganglion (DRG). As to expression, expressed exclusively in trigeminal ganglion and dorsal root ganglion.

It localises to the cell membrane. Its subcellular location is the postsynaptic cell membrane. The protein resides in the cell projection. It is found in the dendrite. It catalyses the reaction Na(+)(in) = Na(+)(out). The catalysed reaction is Li(+)(in) = Li(+)(out). It carries out the reaction K(+)(in) = K(+)(out). The enzyme catalyses Ca(2+)(in) = Ca(2+)(out). It catalyses the reaction H(+)(in) = H(+)(out). Its activity is regulated as follows. Inhibited by the diuretic drug amiloride. External calcium is required to potentiate proton activation of ASIC1 at physiological concentrations, but at higher, non-physiological concentrations, it inhibits activation. Also potentiated by other multivalent cations like Mg(2+), Ba(2+). Activated by FMRFamide-related neuropeptides. Inhibited by anti-inflammatory drugs like salicylic acid. The spider venom psalmotoxin-1 specifically inhibits the ASIC1 homotrimer. The snake venom mambalgin-1, mambalgin-2 and mambalgin-3 inhibit the homotrimer of Asic1a (ASIC1 isoform 1). The snake venom mambalgin-1 and mambalgin-2 inhibit heterotrimers of Asic1a-Asic1b (ASIC1 isoform 1-ASIC1 isoform 3). Heterotrimer of Asic1a-Asic2a is inhibited by the snake venom mambalgin-1, mambalgin-2 and mambalgin-3. Heterotrimer of Asic1a-Asic2b is inhibited by the snake venom mambalgin-1 and mambalgin-2. The spider venom Pi-theraphotoxin-Hm3a inhibits the homotrimer of Asic1a (ASIC1 isoform 1). The spider venom Pi-theraphotoxin-Hm3a inhibits heterotrimers of Asic1a-Asic1b (ASIC1 isoform 1-ASIC1 isoform 3). The spider venom Pi-hexatoxin-Hi1a inhibits the ASIC1 homotrimer. Not inhibited by extracellular calcium. Its function is as follows. Forms voltage-independent, pH-gated trimeric sodium channels that act as postsynaptic excitatory receptors in the nervous system, playing a crucial role in regulating synaptic plasticity, learning, and memory. Upon extracellular pH drop this channel elicits transient, fast activating, and completely desensitizing inward currents. Displays high selectivity for sodium ions but can also permit the permeation of other cations. Regulates more or less directly intracellular calcium concentration and CaMKII phosphorylation, and thereby the density of dendritic spines. Modulates neuronal activity in the circuits underlying innate fear. In terms of biological role, permeable to other cations including calcium, lithium and potassium. Functionally, pH activation and steady-state inactivation are shifted to more acidic values. Forms channels that are not permeable to calcium as it discrimates stronger between monovalent cations. Has no pH-gated sodium channel activity per se but can associate with other ASICs and regulate their pH-sensitivity. This chain is Acid-sensing ion channel 1, found in Rattus norvegicus (Rat).